A 414-amino-acid chain; its full sequence is Ornithine aminotransferase (414 aa).

Cysteines 154 and 163 form a disulfide. Lys262 carries the N6-(pyridoxal phosphate)lysine modification.

It belongs to the class-III pyridoxal-phosphate-dependent aminotransferase family. As to quaternary structure, homodimer. It depends on pyridoxal 5'-phosphate as a cofactor. The disulfide bond between Cys-154 and Cys-163 is reduced by TRX1 which increases OAT catalytic activity.

The protein resides in the cytoplasm. It catalyses the reaction a 2-oxocarboxylate + L-ornithine = L-glutamate 5-semialdehyde + an L-alpha-amino acid. It carries out the reaction L-ornithine + 2-oxoglutarate = L-glutamate 5-semialdehyde + L-glutamate. It participates in amino-acid biosynthesis; L-proline biosynthesis; L-glutamate 5-semialdehyde from L-ornithine: step 1/1. Unlike for mammalian OATs, activity is increased by TRX1-mediated reduction of the disulfide bond between Cys-154 and Cys-163. Binding to TRX1 may also induce conformational changes that facilitate substrate binding. Functionally, catalyzes the transamination of alpha-ketoglutarate with ornithine or N-acetylornithine and of glutamate-5-semialdehyde with glutamate and alanine. In Plasmodium chabaudi chabaudi, this protein is Ornithine aminotransferase.